The primary structure comprises 269 residues: Energy-coupling factor transporter ATP-binding protein EcfA1 (269 aa).

The region spanning isoleucine 8–aspartate 242 is the ABC transporter domain. Position 42 to 49 (glycine 42 to serine 49) interacts with ATP.

It belongs to the ABC transporter superfamily. Energy-coupling factor EcfA family. As to quaternary structure, forms a stable energy-coupling factor (ECF) transporter complex composed of 2 membrane-embedded substrate-binding proteins (S component), 2 ATP-binding proteins (A component) and 2 transmembrane proteins (T component).

The protein localises to the cell membrane. Its function is as follows. ATP-binding (A) component of a common energy-coupling factor (ECF) ABC-transporter complex. Unlike classic ABC transporters this ECF transporter provides the energy necessary to transport a number of different substrates. The polypeptide is Energy-coupling factor transporter ATP-binding protein EcfA1 (Staphylococcus aureus (strain bovine RF122 / ET3-1)).